The following is a 232-amino-acid chain: Lipoprotein-releasing system ATP-binding protein LolD 2 (232 aa).

In terms of domain architecture, ABC transporter spans 11 to 231; the sequence is VYLHDIKRQY…SLQDGVVVEL (221 aa). 47–54 serves as a coordination point for ATP; it reads APSGSGKS.

The protein belongs to the ABC transporter superfamily. Lipoprotein translocase (TC 3.A.1.125) family. The complex is composed of two ATP-binding proteins (LolD) and two transmembrane proteins (LolC and LolE).

It localises to the cell inner membrane. In terms of biological role, part of the ABC transporter complex LolCDE involved in the translocation of mature outer membrane-directed lipoproteins, from the inner membrane to the periplasmic chaperone, LolA. Responsible for the formation of the LolA-lipoprotein complex in an ATP-dependent manner. The protein is Lipoprotein-releasing system ATP-binding protein LolD 2 of Rhodopseudomonas palustris (strain ATCC BAA-98 / CGA009).